Here is a 103-residue protein sequence, read N- to C-terminus: Pyrimidine/purine nucleoside phosphorylase (103 aa).

Belongs to the nucleoside phosphorylase PpnP family.

It carries out the reaction a purine D-ribonucleoside + phosphate = a purine nucleobase + alpha-D-ribose 1-phosphate. The enzyme catalyses adenosine + phosphate = alpha-D-ribose 1-phosphate + adenine. The catalysed reaction is cytidine + phosphate = cytosine + alpha-D-ribose 1-phosphate. It catalyses the reaction guanosine + phosphate = alpha-D-ribose 1-phosphate + guanine. It carries out the reaction inosine + phosphate = alpha-D-ribose 1-phosphate + hypoxanthine. The enzyme catalyses thymidine + phosphate = 2-deoxy-alpha-D-ribose 1-phosphate + thymine. The catalysed reaction is uridine + phosphate = alpha-D-ribose 1-phosphate + uracil. It catalyses the reaction xanthosine + phosphate = alpha-D-ribose 1-phosphate + xanthine. Its function is as follows. Catalyzes the phosphorolysis of diverse nucleosides, yielding D-ribose 1-phosphate and the respective free bases. Can use uridine, adenosine, guanosine, cytidine, thymidine, inosine and xanthosine as substrates. Also catalyzes the reverse reactions. This chain is Pyrimidine/purine nucleoside phosphorylase, found in Shewanella oneidensis (strain ATCC 700550 / JCM 31522 / CIP 106686 / LMG 19005 / NCIMB 14063 / MR-1).